The chain runs to 1534 residues: DNA-directed RNA polymerase subunit beta'' (1534 aa).

Cys220, Cys296, Cys303, and Cys306 together coordinate Zn(2+). 2 stretches are compositionally biased toward basic and acidic residues: residues 644–668 and 678–688; these read RTQE…RTRE and PENKYRTREGE. 2 disordered regions span residues 644–698 and 719–800; these read RTQE…EDEY and YRTL…KKEG. Composition is skewed to acidic residues over residues 744–762 and 770–789; these read GEYE…SSED and TLEE…EYGS.

The protein belongs to the RNA polymerase beta' chain family. RpoC2 subfamily. In terms of assembly, in plastids the minimal PEP RNA polymerase catalytic core is composed of four subunits: alpha, beta, beta', and beta''. When a (nuclear-encoded) sigma factor is associated with the core the holoenzyme is formed, which can initiate transcription. Requires Zn(2+) as cofactor.

The protein resides in the plastid. It is found in the chloroplast. It catalyses the reaction RNA(n) + a ribonucleoside 5'-triphosphate = RNA(n+1) + diphosphate. Its function is as follows. DNA-dependent RNA polymerase catalyzes the transcription of DNA into RNA using the four ribonucleoside triphosphates as substrates. This Saccharum hybrid (Sugarcane) protein is DNA-directed RNA polymerase subunit beta''.